The primary structure comprises 493 residues: Glutamate--tRNA ligase (493 aa).

A 'HIGH' region motif is present at residues 10–20 (PSPTGDPHVGT). Zn(2+) is bound by residues Cys-107, Cys-109, Cys-134, and His-136. The 'KMSKS' region motif lies at 251-255 (KLSKR). An ATP-binding site is contributed by Lys-254.

This sequence belongs to the class-I aminoacyl-tRNA synthetase family. Glutamate--tRNA ligase type 1 subfamily. As to quaternary structure, monomer. Zn(2+) is required as a cofactor.

It localises to the cytoplasm. It carries out the reaction tRNA(Glu) + L-glutamate + ATP = L-glutamyl-tRNA(Glu) + AMP + diphosphate. In terms of biological role, catalyzes the attachment of glutamate to tRNA(Glu) in a two-step reaction: glutamate is first activated by ATP to form Glu-AMP and then transferred to the acceptor end of tRNA(Glu). The polypeptide is Glutamate--tRNA ligase (Ectopseudomonas mendocina (strain ymp) (Pseudomonas mendocina)).